The chain runs to 244 residues: 5-oxoprolinase subunit A (244 aa).

Belongs to the LamB/PxpA family. As to quaternary structure, forms a complex composed of PxpA, PxpB and PxpC.

It catalyses the reaction 5-oxo-L-proline + ATP + 2 H2O = L-glutamate + ADP + phosphate + H(+). Catalyzes the cleavage of 5-oxoproline to form L-glutamate coupled to the hydrolysis of ATP to ADP and inorganic phosphate. The chain is 5-oxoprolinase subunit A from Shigella flexneri.